The chain runs to 283 residues: NAD kinase (283 aa).

Aspartate 66 functions as the Proton acceptor in the catalytic mechanism. Residues 66–67 (DG), 137–138 (ND), arginine 165, aspartate 167, and 178–183 (TGYSLS) contribute to the NAD(+) site.

Belongs to the NAD kinase family. A divalent metal cation is required as a cofactor.

It localises to the cytoplasm. It carries out the reaction NAD(+) + ATP = ADP + NADP(+) + H(+). In terms of biological role, involved in the regulation of the intracellular balance of NAD and NADP, and is a key enzyme in the biosynthesis of NADP. Catalyzes specifically the phosphorylation on 2'-hydroxyl of the adenosine moiety of NAD to yield NADP. In Chloroherpeton thalassium (strain ATCC 35110 / GB-78), this protein is NAD kinase.